Here is a 957-residue protein sequence, read N- to C-terminus: ERC protein 2 (957 aa).

Polar residues predominate over residues 1–13 (MYGSARTITNLEG). A disordered region spans residues 1 to 44 (MYGSARTITNLEGSPSRSPRLPRSPRLGHRRTSSGGGGGTGKTL). The segment covering 14–25 (SPSRSPRLPRSP) has biased composition (low complexity). A phosphoserine mark is found at Ser-65 and Ser-666. A coiled-coil region spans residues 140–917 (RQVRDSTMLD…RMKLMADNYD (778 aa)). The segment at 918-957 (DDHHHYHHHHHHHHHRSPGRSQHSNHRPSPDQDDEEGIWA) is disordered. A compositionally biased stretch (basic residues) spans 922 to 943 (HYHHHHHHHHHRSPGRSQHSNH). Acidic residues predominate over residues 948-957 (DQDDEEGIWA).

Interacts with BSN, ERC1, PPFIA1, PPFIA2, PPFIA3 and PPFIA4. Interacts through its C-terminus with the PDZ domain of RIMS1. Part of a complex consisting of ERC2, RIMS1 and UNC13A.

It localises to the cytoplasm. It is found in the synapse. Its subcellular location is the presynaptic active zone. The protein resides in the cytoskeleton. Functionally, thought to be involved in the organization of the cytomatrix at the nerve terminals active zone (CAZ) which regulates neurotransmitter release. Seems to act together with BSN. May recruit liprin-alpha proteins to the CAZ. The protein is ERC protein 2 (ERC2) of Homo sapiens (Human).